The sequence spans 209 residues: Uracil phosphoribosyltransferase (209 aa).

5-phospho-alpha-D-ribose 1-diphosphate-binding positions include Arg79, Arg104, and 131 to 139 (DPMLATANS). Residues Ile194 and 199 to 201 (GDA) each bind uracil. Asp200 contributes to the 5-phospho-alpha-D-ribose 1-diphosphate binding site.

It belongs to the UPRTase family. Requires Mg(2+) as cofactor.

It catalyses the reaction UMP + diphosphate = 5-phospho-alpha-D-ribose 1-diphosphate + uracil. It participates in pyrimidine metabolism; UMP biosynthesis via salvage pathway; UMP from uracil: step 1/1. Allosterically activated by GTP. In terms of biological role, catalyzes the conversion of uracil and 5-phospho-alpha-D-ribose 1-diphosphate (PRPP) to UMP and diphosphate. This is Uracil phosphoribosyltransferase from Mesorhizobium japonicum (strain LMG 29417 / CECT 9101 / MAFF 303099) (Mesorhizobium loti (strain MAFF 303099)).